We begin with the raw amino-acid sequence, 618 residues long: UvrABC system protein C (618 aa).

One can recognise a GIY-YIG domain in the interval 20–98 (TAPGVYRMYA…IKSLSPRYNV (79 aa)). The UVR domain maps to 207 to 242 (DQLGEEIMHSMQQASEALEFERAARLRDLLSSLRSM).

This sequence belongs to the UvrC family. In terms of assembly, interacts with UvrB in an incision complex.

The protein resides in the cytoplasm. Functionally, the UvrABC repair system catalyzes the recognition and processing of DNA lesions. UvrC both incises the 5' and 3' sides of the lesion. The N-terminal half is responsible for the 3' incision and the C-terminal half is responsible for the 5' incision. In Xanthomonas campestris pv. campestris (strain B100), this protein is UvrABC system protein C.